The primary structure comprises 330 residues: PDZ and LIM domain protein 4 (330 aa).

The PDZ domain occupies 8 to 84; that stretch reads RGPSPWGFRL…QLLLSVSRAE (77 aa). 2 disordered regions span residues 106–152 and 163–182; these read EPEP…SSSA and LHIS…RNRN. Over residues 139 to 152 the composition is skewed to polar residues; that stretch reads QHPQPSRPHASSSA. Residues 255–305 form the LIM zinc-binding domain; sequence CTRCGNGIVGTIVKARDKLYHPECFMCDDCGLNLKQRGYFFIEEQLYCETH.

In terms of assembly, interacts (via LIM domain) with PTPN13. Interacts (via PDZ domain) with ACTN1.

It localises to the cytoplasm. Its subcellular location is the cytoskeleton. It is found in the cell projection. The protein localises to the dendritic spine. The protein resides in the early endosome membrane. It localises to the recycling endosome membrane. Its subcellular location is the nucleus. It is found in the perinuclear region. The protein localises to the lamellipodium. The protein resides in the synapse. It localises to the synaptosome. Its function is as follows. Suppresses SRC activation by recognizing and binding to active SRC and facilitating PTPN13-mediated dephosphorylation of SRC 'Tyr-419' leading to its inactivation. Inactivated SRC dissociates from this protein allowing the initiation of a new SRC inactivation cycle. Involved in reorganization of the actin cytoskeleton. In nonmuscle cells, binds to ACTN1 (alpha-actinin-1), increases the affinity of ACTN1 to F-actin (filamentous actin), and promotes formation of actin stress fibers. Involved in regulation of the synaptic AMPA receptor transport in dendritic spines of hippocampal pyramidal neurons directing the receptors toward an insertion at the postsynaptic membrane. Links endosomal surface-internalized GRIA1-containing AMPA receptors to the alpha-actinin/actin cytoskeleton. Increases AMPA receptor-mediated excitatory postsynaptic currents in neurons. This is PDZ and LIM domain protein 4 (PDLIM4) from Gallus gallus (Chicken).